The chain runs to 395 residues: Argininosuccinate synthase (395 aa).

Residue 7–15 participates in ATP binding; sequence LYSGGLDTS. Residue Tyr83 participates in L-citrulline binding. Residue Gly113 participates in ATP binding. L-aspartate contacts are provided by Thr115, Asn119, and Asp120. Position 119 (Asn119) interacts with L-citrulline. L-citrulline contacts are provided by Arg123, Ser169, Ser178, Glu253, and Tyr265.

The protein belongs to the argininosuccinate synthase family. Type 1 subfamily. In terms of assembly, homotetramer.

It is found in the cytoplasm. The catalysed reaction is L-citrulline + L-aspartate + ATP = 2-(N(omega)-L-arginino)succinate + AMP + diphosphate + H(+). Its pathway is amino-acid biosynthesis; L-arginine biosynthesis; L-arginine from L-ornithine and carbamoyl phosphate: step 2/3. The chain is Argininosuccinate synthase from Picrophilus torridus (strain ATCC 700027 / DSM 9790 / JCM 10055 / NBRC 100828 / KAW 2/3).